Consider the following 387-residue polypeptide: Phosphoglycerate kinase (387 aa).

Residues 21–23 (DLN), arginine 36, 60–63 (HLGR), arginine 114, and arginine 147 contribute to the substrate site. Residues lysine 198, glutamate 313, and 339–342 (GGDT) contribute to the ATP site.

It belongs to the phosphoglycerate kinase family. As to quaternary structure, monomer.

The protein localises to the cytoplasm. It catalyses the reaction (2R)-3-phosphoglycerate + ATP = (2R)-3-phospho-glyceroyl phosphate + ADP. The protein operates within carbohydrate degradation; glycolysis; pyruvate from D-glyceraldehyde 3-phosphate: step 2/5. In Baumannia cicadellinicola subsp. Homalodisca coagulata, this protein is Phosphoglycerate kinase.